A 258-amino-acid chain; its full sequence is MAASDDSSHYFTEFTLSEIVDMENLYKELGDQSLHKDFCQTVASTFSCSVNRNGKSSITWKQVQIWFQEKLKHQSQPKSKTLPSPPLQIHDLSNPSSYASNASNATFVGNSTFVQTRKGKASDLADLAFEAKSARDYAWYDVSSFLTYRVLRTGELEVRVRFSGFDNRHDEWVNVKTSVRERSIPVEPSECGRVNVGDLLLCFQEREDQALYCDGHVLNIKRGIHDHARCNCVFLVRYELDNTEESLGLERICRRPEE.

Positions 138–244 are SAWADEE domain; that stretch reads AWYDVSSFLT…LVRYELDNTE (107 aa). The Zn(2+) site is built by cysteine 191, histidine 225, cysteine 230, and cysteine 232.

Associates with the RNA polymerase IV (Pol IV) complex. Interacts with NRPD1, NRPD2, NRPD3, NRPD3B, CLSY1 and CLSY2.

It localises to the nucleus. In terms of biological role, involved in RNA-directed DNA methylation (RdDM). Required for the silencing of some endogenous RdDM targets and accumulation of 24-nt siRNAs, but not for the production of Pol V-dependent transcripts. Functions in transcriptional silencing through both DNA methylation-dependent and -independent pathways. Required for both maintenance and de-novo DNA methylation. Plays a role in the recruitment of Pol IV to genomic regions associated with K9 methylated histone H3 that are targets for RdDM. This Arabidopsis thaliana (Mouse-ear cress) protein is Protein SAWADEE HOMEODOMAIN HOMOLOG 1 (SHH1).